Consider the following 242-residue polypeptide: MLPRILYMNPIEHVIRQAPAIEAKLGYTFKDPQLLVLAFVHRSFINENREVNQHNERLEFLGDSVLGMLISDYLYCKLPKTPEGQLSYLRSRLVEASSCVHYIQSLDLSGYLLLGKGERMNDGRGRESILADLFEAIIGAIYLDGGLQAAKDFLFKNFHQHIEIILATPLRNWKALLQDYCQKNYQQTPLYQVLHESGPDHSKVFQISVWIQDRELGRGKGTSKKEAQQAAAADALSRVELP.

In terms of domain architecture, RNase III spans 18–146 (APAIEAKLGY…IIGAIYLDGG (129 aa)). E59 provides a ligand contact to Mg(2+). Residue D63 is part of the active site. Positions 132 and 135 each coordinate Mg(2+). Residue E135 is part of the active site. One can recognise a DRBM domain in the interval 172 to 241 (NWKALLQDYC…AADALSRVEL (70 aa)). The span at 218-227 (RGKGTSKKEA) shows a compositional bias: basic and acidic residues. The tract at residues 218–242 (RGKGTSKKEAQQAAAADALSRVELP) is disordered.

The protein belongs to the ribonuclease III family. Homodimer. Mg(2+) serves as cofactor.

The protein resides in the cytoplasm. It catalyses the reaction Endonucleolytic cleavage to 5'-phosphomonoester.. Its function is as follows. Digests double-stranded RNA. Involved in the processing of primary rRNA transcript to yield the immediate precursors to the large and small rRNAs (23S and 16S). Processes some mRNAs, and tRNAs when they are encoded in the rRNA operon. Processes pre-crRNA and tracrRNA of type II CRISPR loci if present in the organism. The sequence is that of Ribonuclease 3 from Protochlamydia amoebophila (strain UWE25).